We begin with the raw amino-acid sequence, 933 residues long: Potassium voltage-gated channel subfamily KQT member 5 (933 aa).

The Cytoplasmic segment spans residues 1–126; the sequence is MPRHHAGGEE…YNVLERPRGW (126 aa). S89 carries the post-translational modification Phosphoserine. A helical membrane pass occupies residues 127-147; it reads AFVYHAFVFLLVFGCLILSVF. Topologically, residues 148–157 are extracellular; that stretch reads STIPEHTKLA. A helical transmembrane segment spans residues 158–178; the sequence is SSCLLILEFVMIVVFGLEFII. The Cytoplasmic portion of the chain corresponds to 179–201; it reads RIWSAGCCCRYRGWQGRLRFARK. The chain crosses the membrane as a helical span at residues 202-222; it reads PFCVIDTIVLIASIAVVSAKT. Residues 223 to 230 lie on the Extracellular side of the membrane; that stretch reads QGNIFATS. Residues 231–253 traverse the membrane as a helical; Voltage-sensor segment; the sequence is ALRSLRFLQILRMVRMDRRGGTW. A 1,2-diacyl-sn-glycero-3-phospho-(1D-myo-inositol-4,5-bisphosphate) contacts are provided by R249 and K265. Over 254–267 the chain is Cytoplasmic; sequence KLLGSVVYAHSKEL. The helical transmembrane segment at 268 to 288 threads the bilayer; sequence ITAWYIGFLVLIFSSFLVYLV. Residues 289–299 are Extracellular-facing; sequence EKDANKEFSTY. Residues 300–320 constitute an intramembrane region (pore-forming); that stretch reads ADALWWGTITLTTIGYGDKTP. Over 321–326 the chain is Extracellular; sequence LTWLGR. Residues 327-347 form a helical membrane-spanning segment; it reads LLSAGFALLGISFFALPAGIL. Residues 348–933 lie on the Cytoplasmic side of the membrane; sequence GSGFALKVQE…ALSLPHVKLN (586 aa). K362 provides a ligand contact to a 1,2-diacyl-sn-glycero-3-phospho-(1D-myo-inositol-4,5-bisphosphate). Residues 371–379 form an interaction with CALM region; that stretch reads AANLIQCVW. The disordered stretch occupies residues 405 to 465; it reads SPTKKEQGEA…EGSPTKVQKS (61 aa). The span at 432–441 shows a compositional bias: polar residues; that stretch reads RGQSIKSRQA. At S448 the chain carries Phosphoserine. The interval 522–529 is interaction with CALM; that stretch reads VIRAIRIM. The disordered stretch occupies residues 578–598; it reads KGQMTSDKKSREKITAEHETT. The segment covering 583–598 has biased composition (basic and acidic residues); it reads SDKKSREKITAEHETT. S832 carries the post-translational modification Phosphoserine. The tract at residues 878 to 933 is disordered; it reads GAEETETDTFDGTPPPAGEAAFSSDSLRTGRSRSSQNICKTGDSTDALSLPHVKLN. The span at 900–924 shows a compositional bias: polar residues; the sequence is SSDSLRTGRSRSSQNICKTGDSTDA.

The protein belongs to the potassium channel family. KQT (TC 1.A.1.15) subfamily. Kv7.5/KCNQ5 sub-subfamily. As to quaternary structure, homotetramer; forms a functional homotetrameric channel resulting in the expression of a small M-current. Heterotetramer with KCNQ3; forms heterotetrameric M-channel responsible for the native M-current. Heterotetramer with KCNQ1; forms a functional voltage-gated potassium channel. Interacts (via C-terminus) with calmodulin/CALM; forms a heterooctameric structure (with 4:4 KCNQ1:CALM stoichiometry); the interaction is calcium-independent, constitutive and participates in the channel function. As to expression, strongly expressed in brain. Also expressed in colon, lung and uterus.

The protein localises to the cell membrane. It catalyses the reaction K(+)(in) = K(+)(out). With respect to regulation, phosphatidylinositol-4,5-bisphosphate (PIP2) is essential to activate KCNQ5 channel by inducing the coupling of the voltage-sensing domain (VSD) and the pore-forming domain (PD). Calcium suppresses KCNQ5 channel current through calcium-bound CALM C-terminus. Therefore CALM acts as calcium sensor that controls channel activity. Zinc potentiates channel activity in a pH-dependent manner. The activity is modulated by small changes in cell volume. Activated by the anticonvulsant retigabine. Inhibited by linopirdine and XE991. Functionally, pore-forming subunit of the voltage-gated potassium (Kv) channel broadly expressed in brain and skeletal muscle and involved in the regulation of neuronal excitability. Associates with KCNQ3/Kv7.3 pore-forming subunit to form a potassium channel which contributes to M-type current, a slowly activating and deactivating potassium conductance which plays a critical role in determining the subthreshold electrical excitability of neurons. Contributes, with other potassium channels, to the molecular diversity of a heterogeneous population of M-channels, varying in kinetic and pharmacological properties, which underlie this physiologically important current. Also forms a functional channel with KCNQ1/Kv7.1 subunit that may contribute to vasoconstriction and hypertension. Channel may be selectively permeable in vitro to other cations besides potassium, in decreasing order of affinity K(+) = Rb(+) &gt; Cs(+) &gt; Na(+). This chain is Potassium voltage-gated channel subfamily KQT member 5, found in Mus musculus (Mouse).